Here is a 279-residue protein sequence, read N- to C-terminus: Biotin synthase (279 aa).

A Radical SAM core domain is found at 2 to 232 (VRNSRLDICS…NVTIKIAAGR (231 aa)). Residues Cys20, Cys24, and Cys27 each coordinate [4Fe-4S] cluster. Residues Cys96, Cys156, and Lys227 each coordinate [2Fe-2S] cluster.

This sequence belongs to the radical SAM superfamily. Biotin synthase family. Homodimer. The cofactor is [4Fe-4S] cluster. Requires [2Fe-2S] cluster as cofactor.

The catalysed reaction is (4R,5S)-dethiobiotin + (sulfur carrier)-SH + 2 reduced [2Fe-2S]-[ferredoxin] + 2 S-adenosyl-L-methionine = (sulfur carrier)-H + biotin + 2 5'-deoxyadenosine + 2 L-methionine + 2 oxidized [2Fe-2S]-[ferredoxin]. It functions in the pathway cofactor biosynthesis; biotin biosynthesis; biotin from 7,8-diaminononanoate: step 2/2. Catalyzes the conversion of dethiobiotin (DTB) to biotin by the insertion of a sulfur atom into dethiobiotin via a radical-based mechanism. The chain is Biotin synthase from Thermotoga neapolitana (strain ATCC 49049 / DSM 4359 / NBRC 107923 / NS-E).